The following is a 3620-amino-acid chain: Cubilin (3620 aa).

A signal peptide spans 1–20 (MSSPFLWSLIILLTFAESNG). The propeptide at 21–32 (EAGGFELQRQKR) is removed in mature form. Positions 39-46 (PRMATERG) are interaction with AMN. The N-linked (GlcNAc...) asparagine glycan is linked to Asn102. Positions 129–165 (DKKVCSSNPCQNGGTCLNLHDSFFCICPSQWKGPLCS) constitute an EGF-like 1 domain. Cystine bridges form between Cys133–Cys144, Cys138–Cys153, Cys155–Cys164, Cys171–Cys187, Cys181–Cys196, and Cys198–Cys207. The EGF-like 2; calcium-binding domain occupies 167–208 (DVNECQIYSGTPLGCQNGATCENTAGSYSCLCSPETHGPQCA). N-linked (GlcNAc...) asparagine glycosylation is present at Asn253. In terms of domain architecture, EGF-like 3; calcium-binding spans 260 to 301 (DIDECNLQHAPCSPLVQCFNTQGSFYCGACPTGWQGNGYSCQ). Intrachain disulfides connect Cys264–Cys277, Cys271–Cys286, Cys289–Cys300, Cys306–Cys321, Cys313–Cys330, Cys333–Cys344, Cys350–Cys363, Cys357–Cys373, Cys396–Cys406, Cys401–Cys415, Cys417–Cys426, Cys433–Cys444, Cys438–Cys453, Cys455–Cys464, Cys471–Cys497, Cys524–Cys546, Cys587–Cys613, Cys640–Cys662, and Cys705–Cys730. The EGF-like 4; calcium-binding domain maps to 302-345 (DIDECKINNGGCSVVPPVMCVNTLGSYHCQACPPGYQGDGRVCT). EGF-like domains lie at 346 to 382 (VIDICSVNNGGCHPEASCSSVLGSLPLCTCLPGYTGN) and 392 to 427 (LSDTCLSHPCLNGQCIETVSGYLCKCESGWAGINCT). N-linked (GlcNAc...) asparagine glycosylation is present at Asn425. The region spanning 429-465 (NINECLSNPCFNGGTCVDGVNAFSCECTRFWTGFLCQ) is the EGF-like 7; calcium-binding domain. 13 consecutive CUB domains span residues 471 to 583 (CGGS…WETQ), 587 to 699 (CGGI…YLTS), 705 to 812 (CGGN…YQVA), 813 to 924 (CGGE…FSAA), 928 to 1038 (CGEI…YEAT), 1044 to 1158 (CMED…WDGS), 1162 to 1274 (CGGN…YQQT), 1275 to 1386 (CRNV…WFIH), 1388 to 1503 (CGGE…WQAV), 1507 to 1616 (CGGI…FNQV), 1617 to 1731 (CGGH…YAAS), 1735 to 1847 (CGGT…FTKI), and 1849 to 1960 (GNDN…WFAV). Asn708 and Asn745 each carry an N-linked (GlcNAc...) asparagine glycan. A disulfide bridge connects residues Cys757 and Cys775. N-linked (GlcNAc...) asparagine glycosylation occurs at Asn777. A disulfide bridge connects residues Cys813 and Cys838. N-linked (GlcNAc...) asparagine glycosylation occurs at Asn853. 2 disulfide bridges follow: Cys865/Cys887 and Cys928/Cys954. N-linked (GlcNAc...) asparagine glycosylation is present at Asn953. Ca(2+) is bound at residue Glu976. A glycan (N-linked (GlcNAc...) asparagine) is linked at Asn980. Cys981 and Cys1001 form a disulfide bridge. 4 residues coordinate Ca(2+): Asp984, Asp1023, Asp1025, and Leu1026. Cys1044 and Cys1070 are joined by a disulfide. Positions 1092, 1102, and 1143 each coordinate Ca(2+). Cys1099 and Cys1121 are joined by a disulfide. A disulfide bond links Cys1162 and Cys1188. Asn1165 carries an N-linked (GlcNAc...) asparagine glycan. Ca(2+) is bound at residue Glu1210. The N-linked (GlcNAc...) asparagine glycan is linked to Asn1214. Cys1215 and Cys1237 are disulfide-bonded. The Ca(2+) site is built by Asp1218, Asp1259, and Gln1262. A disulfide bridge connects residues Cys1275 and Cys1303. 2 N-linked (GlcNAc...) asparagine glycosylation sites follow: Asn1304 and Asn1316. Position 1325 (Glu1325) interacts with Ca(2+). N-linked (GlcNAc...) asparagine glycosylation occurs at Asn1329. Cysteines 1330 and 1348 form a disulfide. Ca(2+)-binding residues include Asp1333, Asp1370, and Val1372. 2 disulfides stabilise this stretch: Cys1388-Cys1414 and Cys1441-Cys1463. N-linked (GlcNAc...) asparagine glycosylation occurs at Asn1497. An intrachain disulfide couples Cys1507 to Cys1533. N-linked (GlcNAc...) asparagine glycosylation occurs at Asn1548. Disulfide bonds link Cys1560-Cys1578, Cys1617-Cys1644, Cys1672-Cys1694, Cys1735-Cys1761, and Cys1788-Cys1809. Asn1643 carries N-linked (GlcNAc...) asparagine glycosylation. Residues Asn1799, Asn1816, and Asn1882 are each glycosylated (N-linked (GlcNAc...) asparagine). A disulfide bridge connects residues Cys1902 and Cys1924. The N-linked (GlcNAc...) asparagine glycan is linked to Asn1961. 2 cysteine pairs are disulfide-bonded: Cys1975/Cys2003 and Cys2029/Cys2051. CUB domains are found at residues 1975–2088 (CGGF…FHKS), 2089–2210 (CGGY…YEAK), 2214–2331 (CGGN…YAIA), 2333–2445 (CGGR…FESS), 2449–2562 (CGGE…YTSS), 2567–2684 (CGGS…YSFT), 2686–2798 (CGGI…WNTQ), 2802–2916 (CGGI…FVSR), 2917–3032 (CGGN…YKIT), 3034–3147 (CGGV…FQQT), 3154–3271 (CGGY…YTTV), 3275–3392 (CGGT…IAGC), 3392–3504 (CNRE…WTSS), and 3508–3620 (CGGT…TWDS). Residues Asn2082 and Asn2114 are each glycosylated (N-linked (GlcNAc...) asparagine). Intrachain disulfides connect Cys2089-Cys2115, Cys2214-Cys2244, and Cys2272-Cys2294. N-linked (GlcNAc...) asparagine glycosylation occurs at Asn2317. A disulfide bridge connects residues Cys2333 and Cys2360. Asn2383 and Asn2397 each carry an N-linked (GlcNAc...) asparagine glycan. 3 cysteine pairs are disulfide-bonded: Cys2387–Cys2408, Cys2449–Cys2475, and Cys2502–Cys2524. N-linked (GlcNAc...) asparagine glycans are attached at residues Asn2528, Asn2578, Asn2589, and Asn2607. Cys2567 and Cys2596 are disulfide-bonded. 7 cysteine pairs are disulfide-bonded: Cys2625–Cys2646, Cys2686–Cys2712, Cys2739–Cys2761, Cys2802–Cys2828, Cys2857–Cys2880, Cys2917–Cys2943, and Cys2974–Cys2996. Asn2810 is a glycosylation site (N-linked (GlcNAc...) asparagine). N-linked (GlcNAc...) asparagine glycans are attached at residues Asn2920, Asn2942, and Asn2986. Thr3005 carries the phosphothreonine modification. 2 disulfide bridges follow: Cys3034/Cys3061 and Cys3088/Cys3110. N-linked (GlcNAc...) asparagine glycans are attached at residues Asn3039, Asn3100, and Asn3122. Cystine bridges form between Cys3154–Cys3182 and Cys3212–Cys3234. N-linked (GlcNAc...) asparagine glycosylation is found at Asn3265, Asn3280, and Asn3292. Cystine bridges form between Cys3275-Cys3303 and Cys3329-Cys3351. N-linked (GlcNAc...) asparagine glycosylation is present at Asn3354. An intrachain disulfide couples Cys3392 to Cys3418. N-linked (GlcNAc...) asparagine glycosylation is found at Asn3427, Asn3454, and Asn3530. 3 disulfides stabilise this stretch: Cys3445/Cys3467, Cys3508/Cys3534, and Cys3561/Cys3583.

As to quaternary structure, interacts with AMN. Component of the cubam complex composed of one CUBN trimer and one AMN chain. The cubam complex can dimerize. Interacts with LRP2 in a dual-receptor complex in a calcium-dependent manner. Found in a complex with PID1/PCLI1, LRP1 and CUBNI. Interacts with LRP1 and PID1/PCLI1. In terms of processing, the precursor is cleaved by a trans-Golgi proteinase furin, removing a propeptide. Post-translationally, N-glycosylated. As to expression, detected in kidney cortex (at protein level). Detected in kidney, duodenum and jejunum.

The protein resides in the apical cell membrane. Its subcellular location is the cell membrane. It is found in the membrane. The protein localises to the coated pit. It localises to the endosome. The protein resides in the lysosome membrane. Functionally, endocytic receptor which plays a role in lipoprotein, vitamin and iron metabolism by facilitating their uptake. Acts together with LRP2 to mediate endocytosis of high-density lipoproteins, GC, hemoglobin, ALB, TF and SCGB1A1. Acts together with AMN to mediate endocytosis of the CBLIF-cobalamin complex. Binds to ALB, MB, Kappa and lambda-light chains, TF, hemoglobin, GC, SCGB1A1, APOA1, high density lipoprotein, and the CBLIF-cobalamin complex. Ligand binding requires calcium. Serves as important transporter in several absorptive epithelia, including intestine, renal proximal tubules and embryonic yolk sac. May play an important role in the development of the peri-implantation embryo through internalization of APOA1 and cholesterol. Binds to LGALS3 at the maternal-fetal interface. The protein is Cubilin (CUBN) of Canis lupus familiaris (Dog).